Reading from the N-terminus, the 443-residue chain is Aspartate--tRNA(Asp/Asn) ligase (443 aa).

Glu-175 is an L-aspartate binding site. The tract at residues 197 to 200 (QLFK) is aspartate. L-aspartate is bound at residue Arg-219. Residues 219 to 221 (RAE), 227 to 229 (RHL), and Glu-366 each bind ATP. Positions 366 and 369 each coordinate Mg(2+). Residues Ser-369 and Arg-373 each coordinate L-aspartate. 414–417 (GCER) is a binding site for ATP.

The protein belongs to the class-II aminoacyl-tRNA synthetase family. Type 2 subfamily. As to quaternary structure, homodimer. Mg(2+) serves as cofactor.

It is found in the cytoplasm. It catalyses the reaction tRNA(Asx) + L-aspartate + ATP = L-aspartyl-tRNA(Asx) + AMP + diphosphate. Functionally, aspartyl-tRNA synthetase with relaxed tRNA specificity since it is able to aspartylate not only its cognate tRNA(Asp) but also tRNA(Asn). Reaction proceeds in two steps: L-aspartate is first activated by ATP to form Asp-AMP and then transferred to the acceptor end of tRNA(Asp/Asn). The protein is Aspartate--tRNA(Asp/Asn) ligase of Methanococcoides burtonii (strain DSM 6242 / NBRC 107633 / OCM 468 / ACE-M).